Consider the following 461-residue polypeptide: Eukaryotic translation initiation factor 3 subunit M (461 aa).

Positions 42–61 are disordered; the sequence is LLEPLRQQEQSDAEPDRKQR. One can recognise a PCI domain in the interval 205–376; the sequence is DQELAQTHVV…SEFLVHRATY (172 aa). The tract at residues 422–461 is disordered; that stretch reads AAEEAAQGKSGDKKGDRRQRRDQPQQSQPAPEAATAVAAE. A compositionally biased stretch (basic and acidic residues) spans 431 to 444; that stretch reads SGDKKGDRRQRRDQ. The segment covering 445–461 has biased composition (low complexity); that stretch reads PQQSQPAPEAATAVAAE.

The protein belongs to the eIF-3 subunit M family. In terms of assembly, component of the eukaryotic translation initiation factor 3 (eIF-3) complex.

The protein localises to the cytoplasm. Component of the eukaryotic translation initiation factor 3 (eIF-3) complex, which is involved in protein synthesis of a specialized repertoire of mRNAs and, together with other initiation factors, stimulates binding of mRNA and methionyl-tRNAi to the 40S ribosome. The eIF-3 complex specifically targets and initiates translation of a subset of mRNAs involved in cell proliferation. This is Eukaryotic translation initiation factor 3 subunit M from Aspergillus terreus (strain NIH 2624 / FGSC A1156).